Consider the following 1268-residue polypeptide: ATP-dependent helicase/nuclease subunit A (1268 aa).

The region spanning 3-476 (TKWTEEQELA…IMLYKNFRSR (474 aa)) is the UvrD-like helicase ATP-binding domain. Residue 24-31 (AAAGSGKT) coordinates ATP. The UvrD-like helicase C-terminal domain occupies 528–824 (IENLKVAGDI…RIMSIHKSKG (297 aa)).

The protein belongs to the helicase family. AddA subfamily. Heterodimer of AddA and AddB/RexB. It depends on Mg(2+) as a cofactor.

It carries out the reaction Couples ATP hydrolysis with the unwinding of duplex DNA by translocating in the 3'-5' direction.. The enzyme catalyses ATP + H2O = ADP + phosphate + H(+). In terms of biological role, the heterodimer acts as both an ATP-dependent DNA helicase and an ATP-dependent, dual-direction single-stranded exonuclease. Recognizes the chi site generating a DNA molecule suitable for the initiation of homologous recombination. The AddA nuclease domain is required for chi fragment generation; this subunit has the helicase and 3' -&gt; 5' nuclease activities. The protein is ATP-dependent helicase/nuclease subunit A of Clostridium perfringens (strain 13 / Type A).